A 512-amino-acid polypeptide reads, in one-letter code: Cytokinin hydroxylase (512 aa).

A helical membrane pass occupies residues 2 to 22 (MVTLVLKYVLVIVMTLILRVL). Residue Cys458 participates in heme binding.

This sequence belongs to the cytochrome P450 family. Heme is required as a cofactor. In terms of tissue distribution, specifically expressed in roots.

It localises to the membrane. The catalysed reaction is N(6)-(dimethylallyl)adenosine 5'-phosphate + NADPH + O2 + H(+) = 9-ribosyl-trans-zeatin 5'-phosphate + NADP(+) + H2O. It carries out the reaction N(6)-(dimethylallyl)adenosine 5'-diphosphate + NADPH + O2 + H(+) = 9-ribosyl-trans-zeatin 5'-diphosphate + NADP(+) + H2O. It catalyses the reaction N(6)-(dimethylallyl)adenosine 5'-triphosphate + NADPH + O2 + H(+) = 9-ribosyl-trans-zeatin 5'-triphosphate + NADP(+) + H2O. In terms of biological role, cytokinin hydroxylase that catalyzes the biosynthesis of trans-zeatin via the isopentenyladenine riboside 5'-monophosphate (iPRMP)-dependent pathway. Can use isopentenyladenosine-5'-monophosphate, isopentenyladenosine-5'-diphosphate and isopentenyladenosine-5'-triphosphate as substrate. This is Cytokinin hydroxylase (CYP735A2) from Arabidopsis thaliana (Mouse-ear cress).